Reading from the N-terminus, the 202-residue chain is Type II restriction enzyme MunI (202 aa).

In terms of assembly, homodimer.

The enzyme catalyses Endonucleolytic cleavage of DNA to give specific double-stranded fragments with terminal 5'-phosphates.. Functionally, a P subtype restriction enzyme that recognizes the double-stranded sequence 5'-CAATTG-3' and cleaves after C-1. The sequence is that of Type II restriction enzyme MunI from Mycoplasma sp.